Reading from the N-terminus, the 309-residue chain is Aspartate carbamoyltransferase catalytic subunit (309 aa).

Positions 58 and 59 each coordinate carbamoyl phosphate. Lysine 86 serves as a coordination point for L-aspartate. Carbamoyl phosphate contacts are provided by arginine 108, histidine 136, and glutamine 139. Positions 170 and 224 each coordinate L-aspartate. The carbamoyl phosphate site is built by glycine 266 and proline 267.

The protein belongs to the aspartate/ornithine carbamoyltransferase superfamily. ATCase family. Heterododecamer (2C3:3R2) of six catalytic PyrB chains organized as two trimers (C3), and six regulatory PyrI chains organized as three dimers (R2).

The catalysed reaction is carbamoyl phosphate + L-aspartate = N-carbamoyl-L-aspartate + phosphate + H(+). The protein operates within pyrimidine metabolism; UMP biosynthesis via de novo pathway; (S)-dihydroorotate from bicarbonate: step 2/3. Its function is as follows. Catalyzes the condensation of carbamoyl phosphate and aspartate to form carbamoyl aspartate and inorganic phosphate, the committed step in the de novo pyrimidine nucleotide biosynthesis pathway. The sequence is that of Aspartate carbamoyltransferase catalytic subunit from Campylobacter concisus (strain 13826).